Here is a 441-residue protein sequence, read N- to C-terminus: Signal recognition particle 54 kDa protein (441 aa).

GTP-binding positions include 104-111, 186-190, and 244-247; these read GLQGSGKT, DTAGR, and TKLD.

It belongs to the GTP-binding SRP family. SRP54 subfamily. In terms of assembly, part of the signal recognition particle protein translocation system, which is composed of SRP and FtsY. Archaeal SRP consists of a 7S RNA molecule of 300 nucleotides and two protein subunits: SRP54 and SRP19.

Its subcellular location is the cytoplasm. The enzyme catalyses GTP + H2O = GDP + phosphate + H(+). Functionally, involved in targeting and insertion of nascent membrane proteins into the cytoplasmic membrane. Binds to the hydrophobic signal sequence of the ribosome-nascent chain (RNC) as it emerges from the ribosomes. The SRP-RNC complex is then targeted to the cytoplasmic membrane where it interacts with the SRP receptor FtsY. In Staphylothermus marinus (strain ATCC 43588 / DSM 3639 / JCM 9404 / F1), this protein is Signal recognition particle 54 kDa protein.